We begin with the raw amino-acid sequence, 1302 residues long: MPKIVLNGVTVDFPFQPYKCQQEYMTKVLECLQQKVNGILESHTGTGKTLCLLCTTLAWREHLRDGISARKIAERVQGELFPDRALSSWGNAAAAAAGDPIACYTDIPKIIYASRTHSQLTQVINELRNTSYRPKVCVLGSREQLCIHPEVKKQESNHIQIHLCRKKVASRSCHFYNNVEEKSLEQELASPILDIEDLVKSGSKHRVCPYYLSRNLKQQADIIFMPYNYLLDAKSRRAHNIDLKGTVVIFDEAHNVEKMCEESASFDLTPHDLASGLDIIDQVLEEQTKTAQQGEPHPEFSADSTSPGLNMELEDIAKLKMILLRLEGAIDAVELPGDDSGVTKPGSYIFELFAEAQITFQTKVCILDSLDQIIQHLAGRAGVFTNTAGLQKLADIIQIVFSVDPSEGGPGSLAGLGALQSYKVHIHPDAGHRQTAQRSDAWSTTAARKRGKVLSYWCFSPGLSMRELVRQGVRSLILTSGTLAPVSSFALEMQIPFPVCLENPHIIDKHQIWVGVVPRGPDGAQLSSAFDRRFSEECLSSLGKALGNTARVVPCGLLIFFPSYPVMEKSLEFWRARDLARKMEALKPLFVEPRSKGSFSETISAYYARVAAPGSTGATFLAVCRGKASEGLDFSDTNGRGVIVTGLPYPPRMDPRVVLKMQFLDEMKGQGGAGGQFLSGQEWYRQQASRAVNQAIGRVIRHRQDYGAVFLCDHRFAFADARAQLPSWVRPHVRVYDNFGHVIRDVAQFFRVAERTMPAPAPRATAPSVREGEDAVREVKSPGPLFSTRKAKSLDLHVPSLKQRSSGSAAAGDPESSLCVEYEQEPIPARQRPRGLLAALEHSEQQAGSPGEEQAHSCSTLFLLSAKRPAEEPRGGRKKIRLVSHPEEPVAGAQTDRAKLYMVAVKQELSQANFATFTQALQDYKGSDDFAALAACLGPLFAEDPKKHSLLQGFYQFVRPHHKQQFEEVCIQLTGRGCGYRPEHSIPRRQPAQPVLDPTGRTAPDPKLTLSKAAAQQLDPREHLNQGRPHLSPRPPPTGDPGSHPQWRSGVPRAGKQGQRAVSAYLADARRALGSAGCSQLLAALRAYKQDDDLDKVLAVLAALTTAKPEDFPLLHRFSMFVRPHHKQRFSQTCTDLTGRPYPGMERPGPQEESLVVPPVLTHGAPQPGPSRSEKPGKTQSKISSLLRQRPAGTVGAGSEDAGPSQSPGPPHGPAASEWGEPHGRDIAGQQAAGAPGGPLSAGCVCQGCGAEDVVPFQCPACDFQRCQACWQRHLQASRMCPACHTASRKQSVTQVFWPEPQ.

The Helicase ATP-binding domain occupies 7-297 (NGVTVDFPFQ…TKTAQQGEPH (291 aa)). An ATP-binding site is contributed by 42-49 (SHTGTGKT). C146, C164, C173, and C208 together coordinate [4Fe-4S] cluster. The Nuclear localization signal signature appears at 152-168 (KKQESNHIQIHLCRKKV). Residues 251–254 (DEAH) carry the DEAH box motif. The span at 758-767 (PAPAPRATAP) shows a compositional bias: low complexity. The tract at residues 758–819 (PAPAPRATAP…AAGDPESSLC (62 aa)) is disordered. Positions 770–780 (REGEDAVREVK) are enriched in basic and acidic residues. The short motif at 873–879 (PRGGRKK) is the Nuclear localization signal element. Disordered regions lie at residues 981 to 1006 (RPEH…APDP), 1019 to 1058 (DPRE…GKQG), 1134 to 1153 (CTDL…PQEE), and 1160 to 1234 (VLTH…QAAG). The span at 1178-1187 (KTQSKISSLL) shows a compositional bias: polar residues. Positions 1180-1187 (QSKISSLL) match the PIP-box motif.

This sequence belongs to the helicase family. RAD3/XPD subfamily. As to quaternary structure, interacts with TERF1. Interacts (via PIP-box) with PCNA; the interaction is direct and essential for suppressing telomere fragility. Interacts with MMS19; the interaction mediates the association of RTEL1 with the cytosolic iron-sulfur protein assembly (CIA) complex.

It is found in the nucleus. The enzyme catalyses ATP + H2O = ADP + phosphate + H(+). Its function is as follows. A probable ATP-dependent DNA helicase implicated in telomere-length regulation, DNA repair and the maintenance of genomic stability. Acts as an anti-recombinase to counteract toxic recombination and limit crossover during meiosis. Regulates meiotic recombination and crossover homeostasis by physically dissociating strand invasion events and thereby promotes noncrossover repair by meiotic synthesis dependent strand annealing (SDSA) as well as disassembly of D loop recombination intermediates. Also disassembles T loops and prevents telomere fragility by counteracting telomeric G4-DNA structures, which together ensure the dynamics and stability of the telomere. This is Regulator of telomere elongation helicase 1 from Pongo abelii (Sumatran orangutan).